Here is a 317-residue protein sequence, read N- to C-terminus: Putative carboxypeptidase RP402 (317 aa).

S125 serves as the catalytic Nucleophile. Catalysis depends on charge relay system residues E225 and H288.

It belongs to the peptidase S66 family.

The chain is Putative carboxypeptidase RP402 from Rickettsia prowazekii (strain Madrid E).